The chain runs to 678 residues: Endoplasmic reticulum membrane-associated RNA degradation protein (678 aa).

Helical transmembrane passes span 390 to 410 (LLAFSLVLLLRFVDDCLLSVF) and 587 to 607 (VLSLILLLIALELVNIHAVCG).

The protein resides in the endoplasmic reticulum membrane. Functionally, may play a role in neuronal migration during embryonic development. The chain is Endoplasmic reticulum membrane-associated RNA degradation protein (ERMARD) from Homo sapiens (Human).